The following is a 22-amino-acid chain: Putative ORF3b protein (22 aa).

Acts as an interferon antagonist when expressed ex vivo. This chain is Putative ORF3b protein, found in Severe acute respiratory syndrome coronavirus 2 (2019-nCoV).